Here is an 856-residue protein sequence, read N- to C-terminus: Translation initiation factor IF-2 (856 aa).

Positions 356–526 constitute a tr-type G domain; sequence PRAPVVTVMG…LLIADLLELK (171 aa). Residues 365-372 are G1; that stretch reads GHVDHGKT. 365 to 372 provides a ligand contact to GTP; it reads GHVDHGKT. The G2 stretch occupies residues 390 to 394; it reads GITQH. Residues 412–415 are G3; sequence DTPG. GTP is bound by residues 412–416 and 466–469; these read DTPGH and NKID. Residues 466–469 are G4; that stretch reads NKID. Positions 502–504 are G5; that stretch reads SAK.

This sequence belongs to the TRAFAC class translation factor GTPase superfamily. Classic translation factor GTPase family. IF-2 subfamily.

Its subcellular location is the cytoplasm. One of the essential components for the initiation of protein synthesis. Protects formylmethionyl-tRNA from spontaneous hydrolysis and promotes its binding to the 30S ribosomal subunits. Also involved in the hydrolysis of GTP during the formation of the 70S ribosomal complex. This chain is Translation initiation factor IF-2, found in Ehrlichia ruminantium (strain Welgevonden).